We begin with the raw amino-acid sequence, 331 residues long: D-alanine--D-alanine ligase (331 aa).

The region spanning 122-328 (KLWYDAIGIP…FHEFLADCIE (207 aa)) is the ATP-grasp domain. 152-207 (AFDKWGKLFVKAARQGSSVGCYSVTKIEQLSDAIDKAFGFSHQVLVEKAVKPRELE) is an ATP binding site. Mg(2+) is bound by residues D282, E295, and N297.

This sequence belongs to the D-alanine--D-alanine ligase family. Mg(2+) is required as a cofactor. The cofactor is Mn(2+).

Its subcellular location is the cytoplasm. It catalyses the reaction 2 D-alanine + ATP = D-alanyl-D-alanine + ADP + phosphate + H(+). The protein operates within cell wall biogenesis; peptidoglycan biosynthesis. Functionally, cell wall formation. In Vibrio vulnificus (strain CMCP6), this protein is D-alanine--D-alanine ligase.